The chain runs to 478 residues: uncharacterized protein (478 aa).

An RRM domain is found at 5 to 85; that stretch reads KRIYVGGLSS…SKLRIEEARP (81 aa). A phosphoserine mark is found at serine 207 and serine 308.

It localises to the nucleus. The protein resides in the nucleolus. This is an uncharacterized protein from Schizosaccharomyces pombe (strain 972 / ATCC 24843) (Fission yeast).